The sequence spans 240 residues: MKVKKGGGGAGTGAEPASGAPGPSVEPKPEPQAESESGSESEPEAGPGPRPGPLQRKQRIGPEDVLGLQRITGDYLCSPEENIYKIDFIRFKIRDMDSGTVLFEIKKPPASERLPINRRDLDPNAGRFVRYQFTPAFLRLRQVGATVEFTVGDKPVNNFRMIERHYFRNQLLKSFDFHFGFCIPSSKNTCEHIYDFPPLSEELINEMIRHPYETQSDSFYFVDDRLVMHNKADYSYSGTP.

A compositionally biased stretch (gly residues) spans 1–12 (MKVKKGGGGAGT). Positions 1–61 (MKVKKGGGGA…GPLQRKQRIG (61 aa)) are disordered. Positions 13 to 23 (GAEPASGAPGP) are enriched in low complexity. Ser-37, Ser-39, and Ser-41 each carry phosphoserine; by CK2. A tetradecanoate-binding site is contributed by Tyr-131.

The protein belongs to the PDE6D/unc-119 family. In terms of assembly, interacts with CABP4; in the absence of calcium. May interact with GTP-bound ARL1. Interacts with ARL2 and ARL3 (GTP-bound forms); this promotes the release of myristoylated cargo proteins. Found in a complex with ARL3, RP2 and UNC119; RP2 induces hydrolysis of GTP ARL3 in the complex, leading to the release of UNC119. Interacts with NPHP3 (when myristoylated). Interacts with CYS1 (when myristoylated). Interacts with MACIR; interaction only takes place when UNC119 is not liganded with myristoylated proteins. Interacts with LCK; this interaction plays a crucial role in activation of LCK. Interacts with FYN. Interacts with RAB11A; in a cell cycle-dependent manner. Interacts with LYN (via SH2 and SH3 domains); leading to LYN activation. Interacts with DNM1; leading to a decrease of DNM1 GTPase activity. Found in a complex with ABL1, ABL2, CRK and UNC119; leading to the inhibition of CRK phosphorylation by ABL kinases. Interacts with CD44. Interacts with KLHL18 (via kelch repeats). Interacts with PPP3CA, PPP3CB and PPP3CC. Interacts with USP48; this interaction promotes UNC119 stability. Phosphorylation suppresses its interaction with KLHL18 and down-regulates its KLHL18-mediated degradation. Phosphorylated more under light conditions than dark conditions. Dephosphorylated by calcineurin.

Its subcellular location is the cytoplasm. The protein resides in the cytoskeleton. The protein localises to the microtubule organizing center. It is found in the centrosome. It localises to the spindle. Its subcellular location is the spindle pole. Its function is as follows. Involved in synaptic functions in photoreceptor cells, the signal transduction in immune cells as a Src family kinase activator, endosome recycling, the uptake of bacteria and endocytosis, protein trafficking in sensory neurons and as lipid-binding chaperone with specificity for a diverse subset of myristoylated proteins. Specifically binds the myristoyl moiety of a subset of N-terminally myristoylated proteins and is required for their localization. Binds myristoylated GNAT1 and is required for G-protein localization and trafficking in sensory neurons. Probably plays a role in trafficking proteins in photoreceptor cells. Plays important roles in mediating Src family kinase signals for the completion of cytokinesis via RAB11A. This Canis lupus familiaris (Dog) protein is Protein unc-119 homolog A (UNC119).